Consider the following 315-residue polypeptide: PIH1 domain-containing protein 2 (315 aa).

This sequence belongs to the PIH1 family.

This chain is PIH1 domain-containing protein 2 (PIH1D2), found in Bos taurus (Bovine).